Consider the following 198-residue polypeptide: Nucleoid occlusion factor SlmA (198 aa).

The HTH tetR-type domain maps to 9-70 (RNRREEILQA…SLIEFIEDTL (62 aa)). The segment at residues 33-52 (TTAKLAANVGVSEAALYRHF) is a DNA-binding region (H-T-H motif). Residues 117–144 (EQDRLQGRINQLFERIEAQLRQVLKERR) adopt a coiled-coil conformation.

Belongs to the nucleoid occlusion factor SlmA family. As to quaternary structure, homodimer. Interacts with FtsZ.

The protein localises to the cytoplasm. The protein resides in the nucleoid. Required for nucleoid occlusion (NO) phenomenon, which prevents Z-ring formation and cell division over the nucleoid. Acts as a DNA-associated cell division inhibitor that binds simultaneously chromosomal DNA and FtsZ, and disrupts the assembly of FtsZ polymers. SlmA-DNA-binding sequences (SBS) are dispersed on non-Ter regions of the chromosome, preventing FtsZ polymerization at these regions. The polypeptide is Nucleoid occlusion factor SlmA (Edwardsiella ictaluri (strain 93-146)).